We begin with the raw amino-acid sequence, 897 residues long: 3'-5' exonuclease DinG (897 aa).

Positions 8-161 constitute an Exonuclease domain; sequence VVDLETTGNQ…DEDAATTAKL (154 aa). The Helicase ATP-binding domain maps to 241 to 496; the sequence is SKAVDQLGLT…KAIDQLEKQR (256 aa). 276 to 283 contributes to the ATP binding site; it reads ASLGSGKS. A DEAH box motif is present at residues 448 to 451; the sequence is DEAH. Residues 703–883 enclose the Helicase C-terminal domain; sequence NIDEYVASIV…NYRQKKGDIQ (181 aa).

The protein belongs to the helicase family. DinG subfamily. Type 2 sub-subfamily.

Functionally, 3'-5' exonuclease. The protein is 3'-5' exonuclease DinG of Staphylococcus aureus (strain bovine RF122 / ET3-1).